The primary structure comprises 710 residues: Early transcription factor 82 kDa subunit (710 aa).

Belongs to the poxviridae VETF large subunit family. As to quaternary structure, heterodimer of a 70 kDa and a 82 kDa subunit. Part of the early transcription complex composed of ETF, RAP94/OPG109, and the DNA-directed RNA polymerase.

The protein localises to the virion. In terms of biological role, acts with RNA polymerase to initiate transcription from early gene promoters. Is recruited by the RPO-associated protein of 94 kDa RAP94/OPG109 to form the early transcription complex, which also contains the core RNA polymerase. ETF heterodimer binds to early gene promoters. This chain is Early transcription factor 82 kDa subunit (OPG133), found in Homo sapiens (Human).